We begin with the raw amino-acid sequence, 334 residues long: Guanine nucleotide-binding protein subunit beta-like protein (334 aa).

6 WD repeats span residues 14-55 (GHKD…DSEF), 65-104 (GHSK…SILL), 106-145 (GHGR…VLKM), 152-192 (MHRG…HLQT), 215-256 (DESK…QSFD), and 257-294 (AIVP…VIAS).

This sequence belongs to the WD repeat G protein beta family.

This Encephalitozoon cuniculi (strain GB-M1) (Microsporidian parasite) protein is Guanine nucleotide-binding protein subunit beta-like protein.